Reading from the N-terminus, the 154-residue chain is Protein X (154 aa).

Positions 28–48 (RTLPGSLGAVPPPSSSAVPAD) are disordered. A compositionally biased stretch (low complexity) spans 30 to 46 (LPGSLGAVPPPSSSAVP). Residues 68 to 117 (PCALRFTSARRMETTVNAPWSLPTVLHKRTLGLSGRSMTWIEDYIKDCVF) are mitochondrial targeting sequence.

This sequence belongs to the orthohepadnavirus protein X family. As to quaternary structure, may form homodimer. May interact with host CEBPA, CFLAR, CREB1, DDB1, E4F1, HBXIP, HSPD1/HSP60, NFKBIA, POLR2E and SMAD4. Interacts with host SMC5-SMC6 complex and induces its degradation. Interacts with host TRPC4AP; leading to prevent ubiquitination of TRPC4AP. Interacts with host PLSCR1; this interaction promotes ubiquitination and degradation of HBx and impairs HBx-mediated cell proliferation. A fraction may be phosphorylated in insect cells and HepG2 cells, a human hepatoblastoma cell line. Phosphorylated in vitro by host protein kinase C or mitogen-activated protein kinase. N-acetylated in insect cells.

It localises to the host cytoplasm. It is found in the host nucleus. The protein localises to the host mitochondrion. Its function is as follows. Multifunctional protein that plays a role in silencing host antiviral defenses and promoting viral transcription. Does not seem to be essential for HBV infection. May be directly involved in development of cirrhosis and liver cancer (hepatocellular carcinoma). Most of cytosolic activities involve modulation of cytosolic calcium. The effect on apoptosis is controversial depending on the cell types in which the studies have been conducted. May induce apoptosis by localizing in mitochondria and causing loss of mitochondrial membrane potential. May also modulate apoptosis by binding host CFLAR, a key regulator of the death-inducing signaling complex (DISC). Promotes viral transcription by using the host E3 ubiquitin ligase DDB1 to target the SMC5-SMC6 complex to proteasomal degradation. This host complex would otherwise bind to viral episomal DNA, and prevents its transcription. Moderately stimulates transcription of many different viral and cellular transcription elements. Promoters and enhancers stimulated by HBx contain DNA binding sites for NF-kappa-B, AP-1, AP-2, c-EBP, ATF/CREB, or the calcium-activated factor NF-AT. This chain is Protein X, found in Homo sapiens (Human).